Here is an 87-residue protein sequence, read N- to C-terminus: MAHKKGASSTRNGRDSNAQYLGVKRFGGQVVSAGEIIVRQRGTHFHPGAGVGRGGDDTLFALQAGAVEFGTRRGRRVVNIVAAAAAE.

Belongs to the bacterial ribosomal protein bL27 family.

This Paenarthrobacter aurescens (strain TC1) protein is Large ribosomal subunit protein bL27.